Reading from the N-terminus, the 496-residue chain is MAGNGVFVDIIEGDVFKYYSEGEWKKSASGKSVAIINPTTRKTQYKVQACTQEEVNKVMEVAKTAQKSWAKTPLWKRAELLHKAAAILKEHKAPIAECLVKEIAKPAKDAVTEVVRSGDLVSYTAEEGVRILGEGKFLVSDSFPGNERTKYCLTSKIPLGVILAIPPFNYPVNLAVSKIAPALIAGNSLVLKPPTQGAVACLHMVHCFHLAGFPKGLISCVTGKGSEIGDFLTMHPGVHCISFTGGDTGVAISKKAGMIPLQMELGGKDACIVLEDADLDLAAGSIVKGGFSYSGQRCTAVKVVLVMESVADALVEKVNAKVAKLTVGPPEDDCDITPVVSESSANFIEGLVMDAKQKNATFCQQYKREGNLIWPLLLDNVRPDMRIAWEEPFGPVLPVIRINSVEEGIHHCNASNFGLQGCVFTKDINKAILISDAMETGTVQINSAPARGPDHFPFQGIKDSGIGSQGITNSINMMTKVKTTVINLPTPSYTMG.

Residues Arg-116 and 169–170 (NY) contribute to the substrate site. NADP(+) is bound by residues Lys-192, Thr-195, and Asp-230. Residue 245–249 (GGDTG) participates in NAD(+) binding. Glu-264 functions as the Proton acceptor in the catalytic mechanism. 297-299 (RCT) is a binding site for substrate. Cys-298 functions as the Nucleophile in the catalytic mechanism. Glu-391 is an NADP(+) binding site. Position 451 (Arg-451) interacts with substrate.

Belongs to the aldehyde dehydrogenase family.

It is found in the cytoplasm. The enzyme catalyses D-glyceraldehyde 3-phosphate + NADP(+) + H2O = (2R)-3-phosphoglycerate + NADPH + 2 H(+). Its function is as follows. Important as a means of generating NADPH for biosynthetic reactions. The sequence is that of NADP-dependent glyceraldehyde-3-phosphate dehydrogenase (GAPN) from Nicotiana plumbaginifolia (Leadwort-leaved tobacco).